Reading from the N-terminus, the 213-residue chain is Riboflavin/roseoflavin transporter RibM (213 aa).

5 consecutive transmembrane segments (helical) span residues 15 to 35 (HIIW…ALGF), 38 to 58 (SLWT…AFYG), 107 to 129 (IAAA…SLSW), 136 to 158 (YIFV…FWFA), and 171 to 193 (FANG…LWGM).

It belongs to the nicotinamide ribonucleoside (NR) uptake permease (TC 4.B.1) family.

It is found in the cell membrane. In terms of biological role, transports riboflavin and roseoflavin. Can also transport FMN and FAD. May confer roseoflavin resistance to S.davawensis, which naturally produces this antibiotic during stationary growth phase. This Streptomyces davaonensis (strain DSM 101723 / JCM 4913 / KCC S-0913 / 768) protein is Riboflavin/roseoflavin transporter RibM.